The sequence spans 246 residues: PARP-type zinc finger-containing protein C2A9.07c (246 aa).

The PARP-type; degenerate zinc finger occupies 8–99 (YRVELAKTGR…EKILRAFEQG (92 aa)). The segment covering 103-126 (EEDEERCRKMASDASEEKDRKIEE) has biased composition (basic and acidic residues). Residues 103-246 (EEDEERCRKM…ESGNEYSDSD (144 aa)) form a disordered region. T130 carries the post-translational modification Phosphothreonine. Residue S131 is modified to Phosphoserine. Positions 157 to 168 (NKKHKAERKRSP) are enriched in basic residues. Residues 175-184 (LEDDEEIEDV) show a composition bias toward acidic residues. The segment covering 185–196 (ASDKDEEEKPWS) has biased composition (basic and acidic residues). Acidic residues predominate over residues 197–215 (GDEEDDDELVVKDSEDETE). Phosphoserine is present on residues S243 and S245.

It localises to the nucleus. The protein resides in the mitochondrion. The polypeptide is PARP-type zinc finger-containing protein C2A9.07c (Schizosaccharomyces pombe (strain 972 / ATCC 24843) (Fission yeast)).